The primary structure comprises 678 residues: DNA gyrase subunit B (678 aa).

The 115-residue stretch at 456-570 (SELYVVEGDS…HGYVFLAQPP (115 aa)) folds into the Toprim domain. Mg(2+) contacts are provided by E462, D535, and D537.

It belongs to the type II topoisomerase GyrB family. As to quaternary structure, heterotetramer, composed of two GyrA and two GyrB chains. In the heterotetramer, GyrA contains the active site tyrosine that forms a transient covalent intermediate with the DNA, while GyrB binds cofactors catalyzes ATP hydrolysis. Mg(2+) serves as cofactor. Requires Mn(2+) as cofactor. It depends on Ca(2+) as a cofactor.

Its subcellular location is the cytoplasm. It carries out the reaction ATP-dependent breakage, passage and rejoining of double-stranded DNA.. DNA supercoiling is inhibited by fluoroquinolones; IC(50) 1 ug/ml for sitafloxacin. A type II topoisomerase that negatively supercoils closed circular double-stranded (ds) DNA in an ATP-dependent manner to modulate DNA topology and maintain chromosomes in an underwound state. Negative supercoiling favors strand separation, and DNA replication, transcription, recombination and repair, all of which involve strand separation. Also able to catalyze the interconversion of other topological isomers of dsDNA rings, including catenanes and knotted rings. Type II topoisomerases break and join 2 DNA strands simultaneously in an ATP-dependent manner. This Mycobacterium leprae (strain TN) protein is DNA gyrase subunit B.